The sequence spans 157 residues: ATP synthase subunit delta (157 aa).

Belongs to the ATPase delta chain family. F-type ATPases have 2 components, F(1) - the catalytic core - and F(0) - the membrane proton channel. F(1) has five subunits: alpha(3), beta(3), gamma(1), delta(1), epsilon(1). F(0) has three main subunits: a(1), b(2) and c(10-14). The alpha and beta chains form an alternating ring which encloses part of the gamma chain. F(1) is attached to F(0) by a central stalk formed by the gamma and epsilon chains, while a peripheral stalk is formed by the delta and b chains.

It is found in the cell membrane. F(1)F(0) ATP synthase produces ATP from ADP in the presence of a proton or sodium gradient. F-type ATPases consist of two structural domains, F(1) containing the extramembraneous catalytic core and F(0) containing the membrane proton channel, linked together by a central stalk and a peripheral stalk. During catalysis, ATP synthesis in the catalytic domain of F(1) is coupled via a rotary mechanism of the central stalk subunits to proton translocation. Functionally, this protein is part of the stalk that links CF(0) to CF(1). It either transmits conformational changes from CF(0) to CF(1) or is implicated in proton conduction. This chain is ATP synthase subunit delta, found in Chloroflexus aggregans (strain MD-66 / DSM 9485).